A 693-amino-acid polypeptide reads, in one-letter code: Polyribonucleotide nucleotidyltransferase (693 aa).

2 residues coordinate Mg(2+): Asp-486 and Asp-492. The 60-residue stretch at 553–612 (PRIHTIKINPEKIKDVIGKGGSVIRMLTEETGTTIEIEDDGTVKISAVMQEKAKCAIQRI) folds into the KH domain. One can recognise an S1 motif domain in the interval 622 to 690 (GSVYTGKVTR…RQGRLRLSIK (69 aa)).

Belongs to the polyribonucleotide nucleotidyltransferase family. In terms of assembly, component of the RNA degradosome, which is a multiprotein complex involved in RNA processing and mRNA degradation. Mg(2+) serves as cofactor.

It is found in the cytoplasm. The enzyme catalyses RNA(n+1) + phosphate = RNA(n) + a ribonucleoside 5'-diphosphate. Involved in mRNA degradation. Catalyzes the phosphorolysis of single-stranded polyribonucleotides processively in the 3'- to 5'-direction. The sequence is that of Polyribonucleotide nucleotidyltransferase from Buchnera aphidicola subsp. Baizongia pistaciae (strain Bp).